The chain runs to 306 residues: MPRILDGNRVRDEIKGELKPRIAALAAHGRPPGLAVVLVGNNPASEIYVRNKIKTCHDLGIYSESITPPDTISTEELLAIVQGLNARAEIDGILVQLPLPPQVDTKRILMAVSPAKDVDGFHPCNVGALVANLPAPRACTPAGIMELLKRGGIPIAGQRAVVVGRSDIVGKPVAMLLLHEHATVTICHSKTPDLKSLCREADILVAAIGRAAMITGEFIKPGATVIDVGTNHVADREKAARIYRNSPEKMANFDKRGNLLIGDVDPVGVVEKAGAYTPVPGGVGPLTIAMLMVNTVASAERRAGVC.

Residues 164-166 (GRS), Ser189, and Thr230 contribute to the NADP(+) site.

This sequence belongs to the tetrahydrofolate dehydrogenase/cyclohydrolase family. In terms of assembly, homodimer.

The catalysed reaction is (6R)-5,10-methylene-5,6,7,8-tetrahydrofolate + NADP(+) = (6R)-5,10-methenyltetrahydrofolate + NADPH. It carries out the reaction (6R)-5,10-methenyltetrahydrofolate + H2O = (6R)-10-formyltetrahydrofolate + H(+). The protein operates within one-carbon metabolism; tetrahydrofolate interconversion. In terms of biological role, catalyzes the oxidation of 5,10-methylenetetrahydrofolate to 5,10-methenyltetrahydrofolate and then the hydrolysis of 5,10-methenyltetrahydrofolate to 10-formyltetrahydrofolate. This is Bifunctional protein FolD from Solibacter usitatus (strain Ellin6076).